The following is a 731-amino-acid chain: MTEQSDLFPAPAPKGSALVATKIKALREQLNRWAHEYYVQDTPSVPDAEYDRAFQQLQALEGAYPDLVTPDSPTQRVLGAVLDGLTPVRHRVPMLSIRTETDTEASGAQAFDARVRRELKLPPDAPPVEYVAEPKFDGLAMSLRYEGGRLVQAATRGDGEVGEDVTHNVRTIRQIPLSLPAGVPPVLEVRGEVYMRRADFDALNERQREKGDKTFVNPRNAAAGAVRQLDSGITAQRPLSFFAYGLGEVTPAAEGGPDFGTHFGMLQQLKEWGFPVAAQVQIAQGASELIAFHQRVGAERDALPYDIDGVVYKVNSLALQRQLGFVTREPRWAVAHKYPAQEMVTRVEGIDVQVGRTGKLTPVARLAPVFVGGVTVTNATLHNLFELRRKKVRVGDQVIVRRAGDVIPEVVGVVPAGAGLAVLAGSDALVDAASSADGTAPAQPLAGPRQPYVPNFRMPRQCPICGSAVVREPGEVNHRCSGGLFCPAQRKQAVLHFAQRRAMDIEGLGEKLVDQLVDGHVIRTLPDLYRLGLSSLAQLDRMAEKSAQNVLDALDKSKRTTLARFLFGLGIRHVGEATAKDLARHFGQLDAIMDAGVEQLLQVNDVGPVVAEAIHTFFAQPHNREVVEQLRACGVTWDESEPAAAATLPLAGMTVVLTGTLPTLGRDAAKDLLESAGAKVAGSVSKKTHYVVAGADAGSKLAKAQELGIPVLDEDGLHALLRGTPPNAGGA.

Residues 47–51 (DAEYD), 96–97 (SI), and Glu-133 contribute to the NAD(+) site. The N6-AMP-lysine intermediate role is filled by Lys-135. Residues Arg-156, Glu-192, Lys-313, and Lys-337 each coordinate NAD(+). The Zn(2+) site is built by Cys-462, Cys-465, Cys-480, and Cys-486. In terms of domain architecture, BRCT spans 645–731 (AATLPLAGMT…RGTPPNAGGA (87 aa)).

Belongs to the NAD-dependent DNA ligase family. LigA subfamily. Mg(2+) serves as cofactor. It depends on Mn(2+) as a cofactor.

It catalyses the reaction NAD(+) + (deoxyribonucleotide)n-3'-hydroxyl + 5'-phospho-(deoxyribonucleotide)m = (deoxyribonucleotide)n+m + AMP + beta-nicotinamide D-nucleotide.. In terms of biological role, DNA ligase that catalyzes the formation of phosphodiester linkages between 5'-phosphoryl and 3'-hydroxyl groups in double-stranded DNA using NAD as a coenzyme and as the energy source for the reaction. It is essential for DNA replication and repair of damaged DNA. The protein is DNA ligase of Acidovorax sp. (strain JS42).